A 211-amino-acid polypeptide reads, in one-letter code: N-(5'-phosphoribosyl)anthranilate isomerase (211 aa).

This sequence belongs to the TrpF family.

The catalysed reaction is N-(5-phospho-beta-D-ribosyl)anthranilate = 1-(2-carboxyphenylamino)-1-deoxy-D-ribulose 5-phosphate. The protein operates within amino-acid biosynthesis; L-tryptophan biosynthesis; L-tryptophan from chorismate: step 3/5. The sequence is that of N-(5'-phosphoribosyl)anthranilate isomerase from Pseudomonas aeruginosa (strain UCBPP-PA14).